We begin with the raw amino-acid sequence, 786 residues long: DENN domain-containing protein 1C (786 aa).

Positions 13–158 constitute a uDENN domain; that stretch reads FDWFFEAGCP…MDSSITVRSE (146 aa). The cDENN domain maps to 182–318; that stretch reads SLPSIPENRN…VVSLLRLRLR (137 aa). The dDENN domain maps to 320–398; the sequence is VALSPGEGVS…ESRLEKLNAG (79 aa). Residues 401-405 carry the FXDXF motif motif; it reads FSDQF. The tract at residues 481–553 is disordered; it reads KDGDSGLQRG…LSPGDTQNPW (73 aa). Residues 527-541 are compositionally biased toward basic and acidic residues; the sequence is LKTEEGPSEPLRERS. A compositionally biased stretch (polar residues) spans 542–552; that stretch reads PTLSPGDTQNP. Phosphoserine is present on S565. Positions 570–579 match the Clathrin box motif; sequence DLLSEILDSL. Disordered regions lie at residues 653-741 and 762-786; these read YSKN…QPPQ and SHVS…CFEN. Positions 657-675 are enriched in low complexity; it reads SCSQPFQQSPPSQGDPGPS. A compositionally biased stretch (polar residues) spans 706–740; it reads LLVSTEPNSDAVQRLQSISSPSCSHSAENPRNQPP. Positions 770–786 are enriched in basic and acidic residues; the sequence is PQDKQPRVADLKKCFEN.

As to quaternary structure, exhibits low nucleotide-independent RAB35-binding activity. Interacts with clathrin heavy chain/CLTC and with AP2A2, but not with AP2B1.

The protein resides in the cytoplasm. The protein localises to the cytosol. It is found in the cytoplasmic vesicle. It localises to the clathrin-coated vesicle. In terms of biological role, guanine nucleotide exchange factor (GEF) which may activate RAB8A, RAB13 and RAB35. Promotes the exchange of GDP to GTP, converting inactive GDP-bound Rab proteins into their active GTP-bound form. The polypeptide is DENN domain-containing protein 1C (Dennd1c) (Mus musculus (Mouse)).